Here is an 886-residue protein sequence, read N- to C-terminus: Receptor-like kinase TMK2 (886 aa).

Positions 1 to 20 are cleaved as a signal peptide; it reads MIAKNFLLLLCFIALVNVES. Residues 21–460 lie on the Extracellular side of the membrane; sequence SPDEAVMIAL…GKKASSNAGK (440 aa). The N-linked (GlcNAc...) asparagine glycan is linked to N41. Residues C48 and C56 are joined by a disulfide bond. LRR repeat units lie at residues 59-83, 84-106, 107-129, 131-155, 157-179, 182-206, 208-232, 233-254, 255-279, and 281-302; these read SNRVTAIQIGDRGISGKLPPDLGKL, TSLTKFEVMRNRLTGPIPSLAGL, KSLVTVYANDNDFTSVPEDFFSG, SSLQHVSLDNNPFDSWVIPPSLENA, SLVDFSAVNCNLSGKIPDYLFEG, FSSLTTLKLSYNSLVCEFPMNFSDS, VQVLMLNGQKGREKLHGSISFLQKM, TSLTNVTLQGNSFSGPLPDFSG, LVSLKSFNVRENQLSGLVPSSLFEL, and SLSDVALGNNLLQGPTPNFTAP. 3 N-linked (GlcNAc...) asparagine glycosylation sites follow: N154, N167, and N202. The N-linked (GlcNAc...) asparagine glycan is linked to N237. N298 is a glycosylation site (N-linked (GlcNAc...) asparagine). Disulfide bonds link C315–C323 and C353–C361. LRR repeat units follow at residues 363 to 386, 387 to 410, and 411 to 438; these read GTDITVINFKNLGLNGTISPRFAD, FASLRVINLSQNNLNGTIPQELAK, and LSNLKTLDVSKNRLCGEVPRFNTTIVNT. N-linked (GlcNAc...) asparagine glycans are attached at residues N377, N394, N401, N432, and N437. Residues 461–481 traverse the membrane as a helical segment; the sequence is IVGSVIGILLALLLIGVAIFF. The Cytoplasmic segment spans residues 482–886; it reads LVKKKMQYHK…ESTFKSGQGR (405 aa). The 281-residue stretch at 547-827 folds into the Protein kinase domain; it reads FDEKNILGRG…HVVNVLVSLV (281 aa). ATP-binding positions include 553 to 561 and K575; that span reads LGRGGFGIV. D676 functions as the Proton acceptor in the catalytic mechanism.

This sequence belongs to the protein kinase superfamily. Ser/Thr protein kinase family. Expressed in siliques and flowers.

It localises to the membrane. It catalyses the reaction L-seryl-[protein] + ATP = O-phospho-L-seryl-[protein] + ADP + H(+). The catalysed reaction is L-threonyl-[protein] + ATP = O-phospho-L-threonyl-[protein] + ADP + H(+). In terms of biological role, involved in auxin signal transduction and cell expansion and proliferation regulation. This chain is Receptor-like kinase TMK2, found in Arabidopsis thaliana (Mouse-ear cress).